The chain runs to 407 residues: Subtilisin-like protease CPC735_013710 (407 aa).

The N-terminal stretch at 1-17 is a signal peptide; that stretch reads MQLLNLSLFFLLPFATA. Positions 18–115 are excised as a propeptide; it reads NPIPQDSQNI…VLPDQKIYLA (98 aa). The region spanning 31-114 is the Inhibitor I9 domain; that stretch reads QYIVTLKDGL…SVLPDQKIYL (84 aa). A Peptidase S8 domain is found at 124–407; the sequence is GWNLGYMSSK…VAYNGIQEML (284 aa). The N-linked (GlcNAc...) asparagine glycan is linked to Asn-145. Active-site charge relay system residues include Asp-162 and His-194. N-linked (GlcNAc...) asparagine glycans are attached at residues Asn-241, Asn-254, and Asn-341. Ser-350 (charge relay system) is an active-site residue. An N-linked (GlcNAc...) asparagine glycan is attached at Asn-381.

The protein belongs to the peptidase S8 family.

Its subcellular location is the secreted. Secreted subtilisin-like serine protease with keratinolytic activity that contributes to pathogenicity. In Coccidioides posadasii (strain C735) (Valley fever fungus), this protein is Subtilisin-like protease CPC735_013710.